Reading from the N-terminus, the 400-residue chain is Protein phosphatase methylesterase 1 (400 aa).

The tract at residues 1–72 is disordered; that stretch reads MSDLQRTWAK…NQKLFARPQG (72 aa). A compositionally biased stretch (acidic residues) spans 19 to 28; it reads PFDEPQEEQG. Low complexity predominate over residues 44 to 54; it reads SSASSASSVSS. Positions 55–64 are enriched in polar residues; sequence TGTIIPSPNQ. Active-site residues include serine 202, aspartate 228, and histidine 358.

This sequence belongs to the AB hydrolase superfamily.

The enzyme catalyses [phosphatase 2A protein]-C-terminal L-leucine methyl ester + H2O = [phosphatase 2A protein]-C-terminal L-leucine + methanol + H(+). Functionally, demethylates proteins that have been reversibly carboxymethylated. Demethylates the phosphatase PP2A catalytic subunit. This chain is Protein phosphatase methylesterase 1 (PPE1), found in Gibberella zeae (strain ATCC MYA-4620 / CBS 123657 / FGSC 9075 / NRRL 31084 / PH-1) (Wheat head blight fungus).